Consider the following 334-residue polypeptide: Holliday junction branch migration complex subunit RuvB (334 aa).

Positions Ala4–Tyr184 are large ATPase domain (RuvB-L). Residues Arg24, Gly65, Lys68, Thr69, Thr70, Glu131–Tyr133, Arg174, Tyr184, and Arg221 contribute to the ATP site. Thr69 contacts Mg(2+). Residues Asn185–Asp255 are small ATPAse domain (RuvB-S). Positions Gly258–Glu334 are head domain (RuvB-H). Residues Arg294, Arg313, and Arg318 each coordinate DNA.

Belongs to the RuvB family. Homohexamer. Forms an RuvA(8)-RuvB(12)-Holliday junction (HJ) complex. HJ DNA is sandwiched between 2 RuvA tetramers; dsDNA enters through RuvA and exits via RuvB. An RuvB hexamer assembles on each DNA strand where it exits the tetramer. Each RuvB hexamer is contacted by two RuvA subunits (via domain III) on 2 adjacent RuvB subunits; this complex drives branch migration. In the full resolvosome a probable DNA-RuvA(4)-RuvB(12)-RuvC(2) complex forms which resolves the HJ.

The protein resides in the cytoplasm. It carries out the reaction ATP + H2O = ADP + phosphate + H(+). In terms of biological role, the RuvA-RuvB-RuvC complex processes Holliday junction (HJ) DNA during genetic recombination and DNA repair, while the RuvA-RuvB complex plays an important role in the rescue of blocked DNA replication forks via replication fork reversal (RFR). RuvA specifically binds to HJ cruciform DNA, conferring on it an open structure. The RuvB hexamer acts as an ATP-dependent pump, pulling dsDNA into and through the RuvAB complex. RuvB forms 2 homohexamers on either side of HJ DNA bound by 1 or 2 RuvA tetramers; 4 subunits per hexamer contact DNA at a time. Coordinated motions by a converter formed by DNA-disengaged RuvB subunits stimulates ATP hydrolysis and nucleotide exchange. Immobilization of the converter enables RuvB to convert the ATP-contained energy into a lever motion, pulling 2 nucleotides of DNA out of the RuvA tetramer per ATP hydrolyzed, thus driving DNA branch migration. The RuvB motors rotate together with the DNA substrate, which together with the progressing nucleotide cycle form the mechanistic basis for DNA recombination by continuous HJ branch migration. Branch migration allows RuvC to scan DNA until it finds its consensus sequence, where it cleaves and resolves cruciform DNA. The sequence is that of Holliday junction branch migration complex subunit RuvB from Shewanella sp. (strain MR-4).